Consider the following 464-residue polypeptide: Glycine--tRNA ligase (464 aa).

The substrate site is built by arginine 104 and glutamate 175. Residues 207-209 (RNE), 217-222 (FRTREF), 292-293 (EL), and 336-339 (GVNR) each bind ATP. Residue 222–226 (FEQME) participates in substrate binding. 332–336 (EPALG) contributes to the substrate binding site.

This sequence belongs to the class-II aminoacyl-tRNA synthetase family. Homodimer.

The protein localises to the cytoplasm. The catalysed reaction is tRNA(Gly) + glycine + ATP = glycyl-tRNA(Gly) + AMP + diphosphate. Its function is as follows. Catalyzes the attachment of glycine to tRNA(Gly). This is Glycine--tRNA ligase from Leptospira interrogans serogroup Icterohaemorrhagiae serovar Lai (strain 56601).